The sequence spans 231 residues: NADH-ubiquinone oxidoreductase chain 4 (231 aa).

6 helical membrane-spanning segments follow: residues 1–21 (PIAG…YGII), 34–54 (LFLP…LTCL), 63–85 (IAYS…TPWG), 89–111 (AMAL…NTTY), 118–138 (ILIL…WWLL), and 156–176 (LLIM…LGLS).

The protein belongs to the complex I subunit 4 family.

It localises to the mitochondrion membrane. The catalysed reaction is a ubiquinone + NADH + 5 H(+)(in) = a ubiquinol + NAD(+) + 4 H(+)(out). Functionally, core subunit of the mitochondrial membrane respiratory chain NADH dehydrogenase (Complex I) that is believed to belong to the minimal assembly required for catalysis. Complex I functions in the transfer of electrons from NADH to the respiratory chain. The immediate electron acceptor for the enzyme is believed to be ubiquinone. This Ovophis okinavensis (Ryukyu Island pit viper) protein is NADH-ubiquinone oxidoreductase chain 4 (MT-ND4).